We begin with the raw amino-acid sequence, 545 residues long: Cryptochrome-1 (545 aa).

In terms of domain architecture, Photolyase/cryptochrome alpha/beta spans Val-3–Leu-138. Residues Arg-236, Ser-264, Ser-266, Gln-307, His-374, Asp-406–Asp-408, Cys-412, and Asn-415 contribute to the FAD site.

Belongs to the DNA photolyase class-1 family. As to quaternary structure, interacts with tim and per; promoted by light conditions. Requires FAD as cofactor.

The protein resides in the cytoplasm. Its subcellular location is the perinuclear region. It localises to the nucleus. In terms of biological role, blue light-dependent regulator that is the input of the circadian feedback loop. Has no photolyase activity for cyclobutane pyrimidine dimers or 6-4 photoproducts. Regulation of expression by light suggests a role in photoreception for locomotor activity rhythms. Functions, together with per, as a transcriptional repressor required for the oscillation of peripheral circadian clocks and for the correct specification of clock cells. Genes directly activated by the transcription factors Clock (Clk) and cycle (cyc) are repressed by cry. The polypeptide is Cryptochrome-1 (Aedes aegypti (Yellowfever mosquito)).